A 553-amino-acid chain; its full sequence is Expansin-like protein 7 (553 aa).

Positions 1-19 (MRLLGSLILTLSLIASAFS) are cleaved as a signal peptide. Residue N39 is glycosylated (N-linked (GlcNAc...) asparagine). An Expansin-like EG45 domain is found at 41–139 (SGSCEYGAYN…RKVSCDASGP (99 aa)). Cystine bridges form between C44-C73 and C76-C134. Residues N276, N325, and N406 are each glycosylated (N-linked (GlcNAc...) asparagine). 2 disordered regions span residues 421 to 447 (GGSG…SSTA) and 460 to 531 (SSSA…DEHH). 2 stretches are compositionally biased toward low complexity: residues 460 to 476 (SSSA…AGGK) and 484 to 493 (ISTSGITGSG). Residues 497 to 516 (AASTSKTTSNPTGKTTGMTG) are compositionally biased toward polar residues. A compositionally biased stretch (basic and acidic residues) spans 520-531 (DHSESHSSDEHH).

The protein belongs to the expansin family. Expansin A subfamily.

It localises to the secreted. Its function is as follows. May serve to lubricate the movement of the cellulose microfibrils during cell growth and wall extension and/or may serve to maintain the fluid state of the slug cell wall. Overexpression shows aberrant stalk formation. This is Expansin-like protein 7 (expl7) from Dictyostelium discoideum (Social amoeba).